The primary structure comprises 97 residues: Co-chaperonin GroES (97 aa).

This sequence belongs to the GroES chaperonin family. In terms of assembly, heptamer of 7 subunits arranged in a ring. Interacts with the chaperonin GroEL.

Its subcellular location is the cytoplasm. Functionally, together with the chaperonin GroEL, plays an essential role in assisting protein folding. The GroEL-GroES system forms a nano-cage that allows encapsulation of the non-native substrate proteins and provides a physical environment optimized to promote and accelerate protein folding. GroES binds to the apical surface of the GroEL ring, thereby capping the opening of the GroEL channel. The chain is Co-chaperonin GroES from Stutzerimonas stutzeri (Pseudomonas stutzeri).